We begin with the raw amino-acid sequence, 145 residues long: Large ribosomal subunit protein uL13 (145 aa).

This sequence belongs to the universal ribosomal protein uL13 family. Part of the 50S ribosomal subunit.

In terms of biological role, this protein is one of the early assembly proteins of the 50S ribosomal subunit, although it is not seen to bind rRNA by itself. It is important during the early stages of 50S assembly. The chain is Large ribosomal subunit protein uL13 from Staphylococcus carnosus (strain TM300).